Consider the following 94-residue polypeptide: Pyrimidine/purine nucleoside phosphorylase (94 aa).

This sequence belongs to the nucleoside phosphorylase PpnP family.

The catalysed reaction is a purine D-ribonucleoside + phosphate = a purine nucleobase + alpha-D-ribose 1-phosphate. It carries out the reaction adenosine + phosphate = alpha-D-ribose 1-phosphate + adenine. It catalyses the reaction cytidine + phosphate = cytosine + alpha-D-ribose 1-phosphate. The enzyme catalyses guanosine + phosphate = alpha-D-ribose 1-phosphate + guanine. The catalysed reaction is inosine + phosphate = alpha-D-ribose 1-phosphate + hypoxanthine. It carries out the reaction thymidine + phosphate = 2-deoxy-alpha-D-ribose 1-phosphate + thymine. It catalyses the reaction uridine + phosphate = alpha-D-ribose 1-phosphate + uracil. The enzyme catalyses xanthosine + phosphate = alpha-D-ribose 1-phosphate + xanthine. Its function is as follows. Catalyzes the phosphorolysis of diverse nucleosides, yielding D-ribose 1-phosphate and the respective free bases. Can use uridine, adenosine, guanosine, cytidine, thymidine, inosine and xanthosine as substrates. Also catalyzes the reverse reactions. The sequence is that of Pyrimidine/purine nucleoside phosphorylase from Salmonella agona (strain SL483).